A 372-amino-acid polypeptide reads, in one-letter code: GTPase Obg (372 aa).

The Obg domain maps to 1-159 (MAFVDEAKFF…KWLLIELKLM (159 aa)). Residues 121–141 (GSGGMGNPHFSSGSNRTPRVA) form a disordered region. In terms of domain architecture, OBG-type G spans 160 to 329 (ADVGLVGLPN…LVKLIGDIID (170 aa)). GTP-binding positions include 166-173 (GLPNAGKS), 191-195 (FTTLE), 213-216 (DIPG), 280-283 (NKCD), and 310-312 (SAI). 2 residues coordinate Mg(2+): S173 and T193. The disordered stretch occupies residues 346-372 (QDLKKQKEEERRQELKKQKEEEQAKDE).

This sequence belongs to the TRAFAC class OBG-HflX-like GTPase superfamily. OBG GTPase family. In terms of assembly, monomer. Requires Mg(2+) as cofactor.

The protein resides in the cytoplasm. Functionally, an essential GTPase which binds GTP, GDP and possibly (p)ppGpp with moderate affinity, with high nucleotide exchange rates and a fairly low GTP hydrolysis rate. Plays a role in control of the cell cycle, stress response, ribosome biogenesis and in those bacteria that undergo differentiation, in morphogenesis control. The protein is GTPase Obg of Desulfotalea psychrophila (strain LSv54 / DSM 12343).